The following is a 255-amino-acid chain: Leucyl/phenylalanyl-tRNA--protein transferase (255 aa).

This sequence belongs to the L/F-transferase family.

It localises to the cytoplasm. The catalysed reaction is N-terminal L-lysyl-[protein] + L-leucyl-tRNA(Leu) = N-terminal L-leucyl-L-lysyl-[protein] + tRNA(Leu) + H(+). It catalyses the reaction N-terminal L-arginyl-[protein] + L-leucyl-tRNA(Leu) = N-terminal L-leucyl-L-arginyl-[protein] + tRNA(Leu) + H(+). It carries out the reaction L-phenylalanyl-tRNA(Phe) + an N-terminal L-alpha-aminoacyl-[protein] = an N-terminal L-phenylalanyl-L-alpha-aminoacyl-[protein] + tRNA(Phe). Its function is as follows. Functions in the N-end rule pathway of protein degradation where it conjugates Leu, Phe and, less efficiently, Met from aminoacyl-tRNAs to the N-termini of proteins containing an N-terminal arginine or lysine. This is Leucyl/phenylalanyl-tRNA--protein transferase from Polaromonas sp. (strain JS666 / ATCC BAA-500).